A 321-amino-acid polypeptide reads, in one-letter code: uncharacterized protein (321 aa).

This is an uncharacterized protein from Sinorhizobium fredii (strain NBRC 101917 / NGR234).